A 277-amino-acid polypeptide reads, in one-letter code: Large ribosomal subunit protein uL2 (277 aa).

The tract at residues 222–277 (GVTMNPVDHPHGGGEGRTSGGRHPVTPWGKPTKGKKTRSNKSTNKFILISRHKRKK) is disordered.

The protein belongs to the universal ribosomal protein uL2 family. Part of the 50S ribosomal subunit. Forms a bridge to the 30S subunit in the 70S ribosome.

One of the primary rRNA binding proteins. Required for association of the 30S and 50S subunits to form the 70S ribosome, for tRNA binding and peptide bond formation. It has been suggested to have peptidyltransferase activity; this is somewhat controversial. Makes several contacts with the 16S rRNA in the 70S ribosome. This Rhodopseudomonas palustris (strain BisB18) protein is Large ribosomal subunit protein uL2.